A 96-amino-acid polypeptide reads, in one-letter code: MPKVIVANINAEFEGIENETIMQILYRNGIEIDSACGGHGQCTSCKVLIISGSENLYPAEFEEKDTLEENGMDPETERLSCQAKLNGKGDVVIYLP.

Residues 2–96 (PKVIVANINA…GKGDVVIYLP (95 aa)) enclose the 2Fe-2S ferredoxin-type domain. 4 residues coordinate [2Fe-2S] cluster: Cys36, Cys42, Cys45, and Cys81.

It belongs to the adrenodoxin/putidaredoxin family. [2Fe-2S] cluster is required as a cofactor.

Functionally, may be involved in the assembly of iron-sulfur clusters (Isc-Fd). The protein is 2Fe-2S ferredoxin-5 (fdx5) of Aquifex aeolicus (strain VF5).